The chain runs to 783 residues: DNA polymerase II (783 aa).

The protein belongs to the DNA polymerase type-B family.

The catalysed reaction is DNA(n) + a 2'-deoxyribonucleoside 5'-triphosphate = DNA(n+1) + diphosphate. With respect to regulation, DNA polymerase II activity is regulated by the lexA gene during the SOS response. Its function is as follows. Thought to be involved in DNA repair and/or mutagenesis. Its processivity is enhanced by the beta sliding clamp (dnaN) and clamp loader. The chain is DNA polymerase II (polB) from Escherichia coli (strain K12).